A 520-amino-acid chain; its full sequence is Amine oxidase [flavin-containing] B (520 aa).

Serine 2 is modified (N-acetylserine). The Cytoplasmic segment spans residues serine 2–valine 489. The residue at position 52 (lysine 52) is an N6-acetyllysine. Cysteine 397 bears the S-8alpha-FAD cysteine mark. Residues proline 490 to leucine 516 form a helical; Anchor for type IV membrane protein membrane-spanning segment. At leucine 517–valine 520 the chain is on the mitochondrial intermembrane side.

In terms of assembly, monomer, homo- or heterodimer (containing two subunits of similar size). Each subunit contains a covalently bound flavin. Enzymatically active as monomer. FAD is required as a cofactor.

The protein localises to the mitochondrion outer membrane. The enzyme catalyses a secondary aliphatic amine + O2 + H2O = a primary amine + an aldehyde + H2O2. It carries out the reaction (R)-adrenaline + O2 + H2O = (R)-3,4-dihydroxymandelaldehyde + methylamine + H2O2. It catalyses the reaction a primary methyl amine + O2 + H2O = an aldehyde + H2O2 + NH4(+). The catalysed reaction is benzylamine + O2 + H2O = benzaldehyde + H2O2 + NH4(+). The enzyme catalyses dopamine + O2 + H2O = 3,4-dihydroxyphenylacetaldehyde + H2O2 + NH4(+). It carries out the reaction tyramine + O2 + H2O = (4-hydroxyphenyl)acetaldehyde + H2O2 + NH4(+). It catalyses the reaction (R)-noradrenaline + O2 + H2O = (R)-3,4-dihydroxymandelaldehyde + H2O2 + NH4(+). The catalysed reaction is 2-phenylethylamine + O2 + H2O = 2-phenylacetaldehyde + H2O2 + NH4(+). The enzyme catalyses N-acetylputrescine + O2 + H2O = 4-acetamidobutanal + H2O2 + NH4(+). With respect to regulation, inhibited by deprenyl. Catalyzes the oxidative deamination of primary and some secondary amines such as neurotransmitters, and exogenous amines including the tertiary amine, neurotoxin 1-methyl-4-phenyl-1,2,3,6-tetrahydropyridine (MPTP), with concomitant reduction of oxygen to hydrogen peroxide and participates in the metabolism of neuroactive and vasoactive amines in the central nervous system and peripheral tissues. Preferentially degrades benzylamine and phenylethylamine. The chain is Amine oxidase [flavin-containing] B from Homo sapiens (Human).